The chain runs to 375 residues: Coproporphyrin III ferrochelatase (375 aa).

The Fe-coproporphyrin III site is built by serine 59 and tyrosine 128. Positions 191 and 286 each coordinate Fe(2+).

Belongs to the ferrochelatase family.

It is found in the cytoplasm. It carries out the reaction Fe-coproporphyrin III + 2 H(+) = coproporphyrin III + Fe(2+). It participates in porphyrin-containing compound metabolism; protoheme biosynthesis. In terms of biological role, involved in coproporphyrin-dependent heme b biosynthesis. Catalyzes the insertion of ferrous iron into coproporphyrin III to form Fe-coproporphyrin III. The chain is Coproporphyrin III ferrochelatase from Streptomyces griseus subsp. griseus (strain JCM 4626 / CBS 651.72 / NBRC 13350 / KCC S-0626 / ISP 5235).